The primary structure comprises 289 residues: ATP synthase mitochondrial F1 complex assembly factor 2 (289 aa).

The transit peptide at 1-40 (MWRIYPRLRDRWRGLLDRRLSDPTVSVWPGPAPQPPARAY) directs the protein to the mitochondrion. Lys-133 bears the N6-succinyllysine mark.

The protein belongs to the ATP12 family. In terms of assembly, interacts with ATP5F1B; involved in the assembly of the F1 component of the mitochondrial ATP synthase (ATPase). Interacts with FMC1.

The protein localises to the mitochondrion inner membrane. Plays a role in the assembly of the F1 component of the mitochondrial ATP synthase (ATPase). The polypeptide is ATP synthase mitochondrial F1 complex assembly factor 2 (Mus musculus (Mouse)).